Here is a 116-residue protein sequence, read N- to C-terminus: Flagellar transcriptional regulator FlhD (116 aa).

The protein belongs to the FlhD family. As to quaternary structure, homodimer; disulfide-linked. Forms a heterohexamer composed of two FlhC and four FlhD subunits. Each FlhC binds a FlhD dimer, forming a heterotrimer, and a hexamer assembles by dimerization of two heterotrimers.

The protein localises to the cytoplasm. Functions in complex with FlhC as a master transcriptional regulator that regulates transcription of several flagellar and non-flagellar operons by binding to their promoter region. Activates expression of class 2 flagellar genes, including fliA, which is a flagellum-specific sigma factor that turns on the class 3 genes. Also regulates genes whose products function in a variety of physiological pathways. This is Flagellar transcriptional regulator FlhD from Pectobacterium carotovorum subsp. carotovorum (strain PC1).